The sequence spans 483 residues: 1-aminocyclopropane-1-carboxylate synthase 2 (483 aa).

The residue at position 275 (K275) is an N6-(pyridoxal phosphate)lysine.

It belongs to the class-I pyridoxal-phosphate-dependent aminotransferase family. Pyridoxal 5'-phosphate is required as a cofactor.

It catalyses the reaction S-adenosyl-L-methionine = 1-aminocyclopropane-1-carboxylate + S-methyl-5'-thioadenosine + H(+). Its pathway is alkene biosynthesis; ethylene biosynthesis via S-adenosyl-L-methionine; ethylene from S-adenosyl-L-methionine: step 1/2. Functionally, catalyzes the formation of 1-aminocyclopropane-1-carboxylate, a direct precursor of ethylene in higher plants. Involved in defense response by producing ethylene after pathogen infection. Involved in several phosphate deficiency-induced adaptive responses, such as lateral root elongation. This is 1-aminocyclopropane-1-carboxylate synthase 2 from Oryza sativa subsp. japonica (Rice).